A 500-amino-acid chain; its full sequence is Polyenoic fatty acid isomerase (500 aa).

A signal peptide spans M1–T21.

As to quaternary structure, homodimer. An oxidized flavin serves as cofactor. Glycosylated.

It catalyses the reaction (5Z,8Z,11Z,14Z,17Z)-eicosapentaenoate = (5Z,7E,9E,14Z,17Z)-icosapentaenoate. In terms of biological role, involved in the biosynthesis of conjugated triene-containing fatty acids. Catalyzes the isomerization of a wide range of substrates containing three or more methylene interrupted olefins into a Z,E,E conjugated triene functionality. May be involved in a stress tolerance mechanism as response to intertidal habitats with direct sunlight, desiccation and high temperature. In vitro substrates include arachidonic acid ((5Z,8Z,11Z,14Z)-eicosatetraenoic acid), EPA ((5Z,8Z, 11Z,14Z,17Z)-eicosapentaenoic acid), DHA ((4Z,7Z,10Z,13Z,16Z,19Z)-docosahexenoic acid), adrenic acid ((7Z,10Z,13Z,16Z)-docosatetraenoic acid), anandamide (arachidonyl-N-ethanolamide) and eicosatrienoic acid ((5Z,8Z,11Z)-eicosatrienoic acid). Gamma-linolenic acid (18:3 6Z,9Z,12Z) and dihomo-gamma-linolenic acid (20:3 8Z,11Z,14Z) are transformed into mixtures of conjugated diene and triene fatty acids, linoleic acid is only transformed to a conjugated diene. The polypeptide is Polyenoic fatty acid isomerase (Ptilota filicina (Red alga)).